We begin with the raw amino-acid sequence, 213 residues long: Glycerol-3-phosphate acyltransferase (213 aa).

Transmembrane regions (helical) follow at residues 2–22, 52–74, 81–100, 112–132, 143–163, and 164–184; these read ITIV…GLWI, AGMA…PIIF, PLIF…FAGF, VIFG…FGAL, VTAS…GFIL, and SNYD…IIIR.

It belongs to the PlsY family. As to quaternary structure, probably interacts with PlsX.

It localises to the cell membrane. The catalysed reaction is an acyl phosphate + sn-glycerol 3-phosphate = a 1-acyl-sn-glycero-3-phosphate + phosphate. The protein operates within lipid metabolism; phospholipid metabolism. Its function is as follows. Catalyzes the transfer of an acyl group from acyl-phosphate (acyl-PO(4)) to glycerol-3-phosphate (G3P) to form lysophosphatidic acid (LPA). This enzyme utilizes acyl-phosphate as fatty acyl donor, but not acyl-CoA or acyl-ACP. This Streptococcus pneumoniae (strain CGSP14) protein is Glycerol-3-phosphate acyltransferase.